A 447-amino-acid chain; its full sequence is MKPVIALVGRPNVGKSTLFNRLTRSRDALVADIPGLTRDRHYGEGRVGDRPFIAIDTGGFEPVAKEGIVAEMAKQTRQAVVEADVVIFIVDGRLGLAPQDRVIADYLRKTGRRILLAVNKAEGMRYTAVASDFYELGLGDPAAISAAHGDGVNDLVAEALDLAFAERPELAEAADAHDHGTRIAIVGRPNVGKSTLVNALIGEERVIAFDMPGTTRDAIYVDFERNGKPYTLIDTAGLRKRGKVFEAIEKFSVVKTLQSIADANVVVLILDAQQDISDQDAHIAGFIVESGRALVIGVNKWDGLTGHARDRIKHDMERKLQFLSFANVHYISAKERTGIGALMKSVDAAYAAAMVKLPTPKLTRVLMEAVEYQQPRRAGVSRPKLRYAHQGGSNPPIVVIHGNALSNIPETYRRFLEGRFREAFQLKGTPLRIEFRTNKNPYAQSND.

EngA-type G domains are found at residues 3-167 (PVIA…FAER) and 181-354 (TRIA…AAAM). GTP-binding positions include 9 to 16 (GRPNVGKS), 56 to 60 (DTGGF), 119 to 122 (NKAE), 187 to 194 (GRPNVGKS), 234 to 238 (DTAGL), and 299 to 302 (NKWD). The 85-residue stretch at 355-439 (VKLPTPKLTR…PLRIEFRTNK (85 aa)) folds into the KH-like domain.

It belongs to the TRAFAC class TrmE-Era-EngA-EngB-Septin-like GTPase superfamily. EngA (Der) GTPase family. As to quaternary structure, associates with the 50S ribosomal subunit.

GTPase that plays an essential role in the late steps of ribosome biogenesis. In Ralstonia pickettii (strain 12J), this protein is GTPase Der.